The following is a 140-amino-acid chain: Myrosinase 2 (140 aa).

Arg70 acts as the Nucleophile in catalysis. Residues Asn114 and Asn127 are each glycosylated (N-linked (GlcNAc...) asparagine).

This sequence belongs to the glycosyl hydrolase 1 family. In terms of assembly, homodimer.

The catalysed reaction is a thioglucoside + H2O = a sugar + a thiol.. Its activity is regulated as follows. Inhibited by ascorbate. Degradation of glucosinolates (glucose residue linked by a thioglucoside bound to an amino acid derivative) to glucose, sulfate and any of the products: thiocyanates, isothiocyanates, nitriles, epithionitriles or oxazolidine-2-thiones. The sequence is that of Myrosinase 2 from Brevicoryne brassicae (Mealy cabbage aphid).